Consider the following 402-residue polypeptide: Phosphoglycerate kinase (402 aa).

Substrate is bound by residues 24–26, Arg-39, 62–65, Arg-121, and Arg-161; these read DLN and HLGR. Residues Lys-211, Gly-299, Glu-330, and 359-362 each bind ATP; that span reads GGDS.

The protein belongs to the phosphoglycerate kinase family. As to quaternary structure, monomer.

Its subcellular location is the cytoplasm. The enzyme catalyses (2R)-3-phosphoglycerate + ATP = (2R)-3-phospho-glyceroyl phosphate + ADP. It participates in carbohydrate degradation; glycolysis; pyruvate from D-glyceraldehyde 3-phosphate: step 2/5. The sequence is that of Phosphoglycerate kinase from Mycolicibacterium gilvum (strain PYR-GCK) (Mycobacterium gilvum (strain PYR-GCK)).